A 347-amino-acid polypeptide reads, in one-letter code: Holliday junction branch migration complex subunit RuvB (347 aa).

The large ATPase domain (RuvB-L) stretch occupies residues methionine 1–tyrosine 182. ATP is bound by residues leucine 21, arginine 22, glycine 63, lysine 66, threonine 67, threonine 68, glutamate 129–phenylalanine 131, arginine 172, tyrosine 182, and arginine 219. A Mg(2+)-binding site is contributed by threonine 67. The segment at threonine 183–leucine 253 is small ATPAse domain (RuvB-S). Residues asparagine 256 to aspartate 347 are head domain (RuvB-H). DNA contacts are provided by arginine 292, arginine 311, and arginine 316.

The protein belongs to the RuvB family. As to quaternary structure, homohexamer. Forms an RuvA(8)-RuvB(12)-Holliday junction (HJ) complex. HJ DNA is sandwiched between 2 RuvA tetramers; dsDNA enters through RuvA and exits via RuvB. An RuvB hexamer assembles on each DNA strand where it exits the tetramer. Each RuvB hexamer is contacted by two RuvA subunits (via domain III) on 2 adjacent RuvB subunits; this complex drives branch migration. In the full resolvosome a probable DNA-RuvA(4)-RuvB(12)-RuvC(2) complex forms which resolves the HJ.

Its subcellular location is the cytoplasm. The enzyme catalyses ATP + H2O = ADP + phosphate + H(+). Its function is as follows. The RuvA-RuvB-RuvC complex processes Holliday junction (HJ) DNA during genetic recombination and DNA repair, while the RuvA-RuvB complex plays an important role in the rescue of blocked DNA replication forks via replication fork reversal (RFR). RuvA specifically binds to HJ cruciform DNA, conferring on it an open structure. The RuvB hexamer acts as an ATP-dependent pump, pulling dsDNA into and through the RuvAB complex. RuvB forms 2 homohexamers on either side of HJ DNA bound by 1 or 2 RuvA tetramers; 4 subunits per hexamer contact DNA at a time. Coordinated motions by a converter formed by DNA-disengaged RuvB subunits stimulates ATP hydrolysis and nucleotide exchange. Immobilization of the converter enables RuvB to convert the ATP-contained energy into a lever motion, pulling 2 nucleotides of DNA out of the RuvA tetramer per ATP hydrolyzed, thus driving DNA branch migration. The RuvB motors rotate together with the DNA substrate, which together with the progressing nucleotide cycle form the mechanistic basis for DNA recombination by continuous HJ branch migration. Branch migration allows RuvC to scan DNA until it finds its consensus sequence, where it cleaves and resolves cruciform DNA. The polypeptide is Holliday junction branch migration complex subunit RuvB (Allorhizobium ampelinum (strain ATCC BAA-846 / DSM 112012 / S4) (Agrobacterium vitis (strain S4))).